Consider the following 196-residue polypeptide: ATP-dependent Clp protease proteolytic subunit (196 aa).

The active-site Nucleophile is the serine 97. Histidine 122 is an active-site residue.

The protein belongs to the peptidase S14 family. As to quaternary structure, fourteen ClpP subunits assemble into 2 heptameric rings which stack back to back to give a disk-like structure with a central cavity, resembling the structure of eukaryotic proteasomes.

The protein resides in the cytoplasm. The enzyme catalyses Hydrolysis of proteins to small peptides in the presence of ATP and magnesium. alpha-casein is the usual test substrate. In the absence of ATP, only oligopeptides shorter than five residues are hydrolyzed (such as succinyl-Leu-Tyr-|-NHMec, and Leu-Tyr-Leu-|-Tyr-Trp, in which cleavage of the -Tyr-|-Leu- and -Tyr-|-Trp bonds also occurs).. Functionally, cleaves peptides in various proteins in a process that requires ATP hydrolysis. Has a chymotrypsin-like activity. Plays a major role in the degradation of misfolded proteins. This chain is ATP-dependent Clp protease proteolytic subunit, found in Lacticaseibacillus paracasei (strain ATCC 334 / BCRC 17002 / CCUG 31169 / CIP 107868 / KCTC 3260 / NRRL B-441) (Lactobacillus paracasei).